The chain runs to 87 residues: Small ribosomal subunit protein bS18 (87 aa).

Belongs to the bacterial ribosomal protein bS18 family. Part of the 30S ribosomal subunit. Forms a tight heterodimer with protein bS6.

Its function is as follows. Binds as a heterodimer with protein bS6 to the central domain of the 16S rRNA, where it helps stabilize the platform of the 30S subunit. The polypeptide is Small ribosomal subunit protein bS18 (Sulfurovum sp. (strain NBC37-1)).